We begin with the raw amino-acid sequence, 345 residues long: Phosphoribosylformylglycinamidine cyclo-ligase (345 aa).

It belongs to the AIR synthase family.

It localises to the cytoplasm. It catalyses the reaction 2-formamido-N(1)-(5-O-phospho-beta-D-ribosyl)acetamidine + ATP = 5-amino-1-(5-phospho-beta-D-ribosyl)imidazole + ADP + phosphate + H(+). Its pathway is purine metabolism; IMP biosynthesis via de novo pathway; 5-amino-1-(5-phospho-D-ribosyl)imidazole from N(2)-formyl-N(1)-(5-phospho-D-ribosyl)glycinamide: step 2/2. The protein is Phosphoribosylformylglycinamidine cyclo-ligase of Shewanella sp. (strain ANA-3).